The sequence spans 300 residues: N-acetylmuramic acid 6-phosphate etherase (300 aa).

The region spanning 57 to 220 is the SIS domain; sequence IAVAFQSGGR…TTGAMIRTGK (164 aa). The active-site Proton donor is the E85. E116 is an active-site residue.

It belongs to the GCKR-like family. MurNAc-6-P etherase subfamily. In terms of assembly, homodimer.

The catalysed reaction is N-acetyl-D-muramate 6-phosphate + H2O = N-acetyl-D-glucosamine 6-phosphate + (R)-lactate. Its pathway is amino-sugar metabolism; 1,6-anhydro-N-acetylmuramate degradation. The protein operates within amino-sugar metabolism; N-acetylmuramate degradation. It functions in the pathway cell wall biogenesis; peptidoglycan recycling. Specifically catalyzes the cleavage of the D-lactyl ether substituent of MurNAc 6-phosphate, producing GlcNAc 6-phosphate and D-lactate. Together with AnmK, is also required for the utilization of anhydro-N-acetylmuramic acid (anhMurNAc) either imported from the medium or derived from its own cell wall murein, and thus plays a role in cell wall recycling. This is N-acetylmuramic acid 6-phosphate etherase from Aliivibrio fischeri (strain ATCC 700601 / ES114) (Vibrio fischeri).